Consider the following 209-residue polypeptide: Uracil phosphoribosyltransferase (209 aa).

5-phospho-alpha-D-ribose 1-diphosphate contacts are provided by residues Arg-79, Arg-104, and Asp-131–Ser-139. Residues Ile-194 and Gly-199–Ala-201 contribute to the uracil site. Asp-200 contributes to the 5-phospho-alpha-D-ribose 1-diphosphate binding site.

It belongs to the UPRTase family. It depends on Mg(2+) as a cofactor.

It carries out the reaction UMP + diphosphate = 5-phospho-alpha-D-ribose 1-diphosphate + uracil. It participates in pyrimidine metabolism; UMP biosynthesis via salvage pathway; UMP from uracil: step 1/1. With respect to regulation, allosterically activated by GTP. Functionally, catalyzes the conversion of uracil and 5-phospho-alpha-D-ribose 1-diphosphate (PRPP) to UMP and diphosphate. In Acidovorax sp. (strain JS42), this protein is Uracil phosphoribosyltransferase.